Consider the following 260-residue polypeptide: Acyl-[acyl-carrier-protein]--UDP-N-acetylglucosamine O-acyltransferase (260 aa).

The protein belongs to the transferase hexapeptide repeat family. LpxA subfamily. Homotrimer.

Its subcellular location is the cytoplasm. The enzyme catalyses a (3R)-hydroxyacyl-[ACP] + UDP-N-acetyl-alpha-D-glucosamine = a UDP-3-O-[(3R)-3-hydroxyacyl]-N-acetyl-alpha-D-glucosamine + holo-[ACP]. It functions in the pathway glycolipid biosynthesis; lipid IV(A) biosynthesis; lipid IV(A) from (3R)-3-hydroxytetradecanoyl-[acyl-carrier-protein] and UDP-N-acetyl-alpha-D-glucosamine: step 1/6. Functionally, involved in the biosynthesis of lipid A, a phosphorylated glycolipid that anchors the lipopolysaccharide to the outer membrane of the cell. The polypeptide is Acyl-[acyl-carrier-protein]--UDP-N-acetylglucosamine O-acyltransferase (Aliarcobacter butzleri (strain RM4018) (Arcobacter butzleri)).